A 216-amino-acid chain; its full sequence is Imidazole glycerol phosphate synthase subunit HisH (216 aa).

One can recognise a Glutamine amidotransferase type-1 domain in the interval 2 to 216 (SIAIIDYGSG…LISNFLRWKP (215 aa)). Cysteine 88 acts as the Nucleophile in catalysis. Catalysis depends on residues histidine 196 and glutamate 198.

As to quaternary structure, heterodimer of HisH and HisF.

The protein resides in the cytoplasm. The enzyme catalyses 5-[(5-phospho-1-deoxy-D-ribulos-1-ylimino)methylamino]-1-(5-phospho-beta-D-ribosyl)imidazole-4-carboxamide + L-glutamine = D-erythro-1-(imidazol-4-yl)glycerol 3-phosphate + 5-amino-1-(5-phospho-beta-D-ribosyl)imidazole-4-carboxamide + L-glutamate + H(+). The catalysed reaction is L-glutamine + H2O = L-glutamate + NH4(+). The protein operates within amino-acid biosynthesis; L-histidine biosynthesis; L-histidine from 5-phospho-alpha-D-ribose 1-diphosphate: step 5/9. Its function is as follows. IGPS catalyzes the conversion of PRFAR and glutamine to IGP, AICAR and glutamate. The HisH subunit catalyzes the hydrolysis of glutamine to glutamate and ammonia as part of the synthesis of IGP and AICAR. The resulting ammonia molecule is channeled to the active site of HisF. In Bradyrhizobium diazoefficiens (strain JCM 10833 / BCRC 13528 / IAM 13628 / NBRC 14792 / USDA 110), this protein is Imidazole glycerol phosphate synthase subunit HisH.